The primary structure comprises 1499 residues: ABC multidrug transporter A-2 (1499 aa).

Disordered regions lie at residues 1-66 (MAMQ…IDQE) and 80-107 (QISQ…NSDK). Residues 16-30 (ISSSAGQEVASTIRR) show a composition bias toward polar residues. Residues 31 to 51 (QFTDADADRIVETPLGEKADS) are compositionally biased toward basic and acidic residues. The segment covering 80-94 (QISQKSAGPTNTFLD) has biased composition (polar residues). One can recognise an ABC transporter 1 domain in the interval 166–415 (LRSILGCRNR…FIDMGFDCPD (250 aa)). N-linked (GlcNAc...) asparagine glycosylation is present at asparagine 339. 5 helical membrane passes run 526 to 546 (MTLA…SVFY), 561 to 581 (LLFF…LTLW), 606 to 626 (MIVD…ILYF), 635 to 655 (GHFF…SNIF), and 669 to 689 (MVPS…TIPV). The N-linked (GlcNAc...) asparagine glycan is linked to asparagine 763. A helical membrane pass occupies residues 778–798 (GIILGFFFFFLAAYIICSELV). An ABC transporter 2 domain is found at 857–1100 (FHWQDVCYDI…LIKYFENKGS (244 aa)). Residue 893–900 (GVTGAGKT) participates in ATP binding. The next 5 helical transmembrane spans lie at 1193 to 1213 (YIYS…FTFW), 1227 to 1247 (FAIF…MPYF), 1268 to 1288 (AFML…AVPA), 1317 to 1337 (LLIL…IAGI), and 1353 to 1373 (LCLI…FWIF). Asparagine 1414 is a glycosylation site (N-linked (GlcNAc...) asparagine). The chain crosses the membrane as a helical span at residues 1466 to 1486 (GLLFVYIVFNIFAAIFLYWLI).

It belongs to the ABC transporter superfamily. ABCG family. PDR (TC 3.A.1.205) subfamily.

The protein resides in the cell membrane. It catalyses the reaction itraconazole(in) + ATP + H2O = itraconazole(out) + ADP + phosphate + H(+). It carries out the reaction voriconazole(in) + ATP + H2O = voriconazole(out) + ADP + phosphate + H(+). The efflux inhibitor FK506 impairs the transport activity. Functionally, pleiotropic ABC efflux transporter that confers resistance to structurally and functionally unrelated compounds including azoles such as itraconazole, posaconazole, and voriconazole. This is ABC multidrug transporter A-2 from Aspergillus fumigatus (strain ATCC MYA-4609 / CBS 101355 / FGSC A1100 / Af293) (Neosartorya fumigata).